The following is a 95-amino-acid chain: MVSQLVTYSAHVILFVLVWLLAYTDVVPVLSYLPECLHCLVNYAPFFAVLFLGIYAVFNVVYGVATFNDCAEAKVELLGEIKEAREELKRKRIID.

2 helical membrane-spanning segments follow: residues 10-30 (AHVILFVLVWLLAYTDVVPVL) and 44-64 (APFFAVLFLGIYAVFNVVYGV).

Belongs to the DPM3 family.

Its subcellular location is the endoplasmic reticulum membrane. It functions in the pathway protein modification; protein glycosylation. Its function is as follows. Stabilizer subunit of the dolichol-phosphate-mannose synthase complex. The polypeptide is Probable dolichol-phosphate mannosyltransferase subunit 3 (dpm-3) (Caenorhabditis elegans).